The primary structure comprises 160 residues: Small ribosomal subunit protein uS19v (160 aa).

It belongs to the universal ribosomal protein uS19 family.

The protein localises to the cytoplasm. The chain is Small ribosomal subunit protein uS19v (RPS15F) from Arabidopsis thaliana (Mouse-ear cress).